Reading from the N-terminus, the 122-residue chain is MIQVESTLQVADNSGAKKVACIKVLGGSHRRYASVGDIVVVSVKEAIPHSKVKKGDVMKAVIVRTAKEVRRMDGSYIKFDGNAAVLLSTQGEPIGTRIFGPVARELRAMNFMKIISLAPEVL.

This sequence belongs to the universal ribosomal protein uL14 family. As to quaternary structure, part of the 50S ribosomal subunit. Forms a cluster with proteins L3 and L19. In the 70S ribosome, L14 and L19 interact and together make contacts with the 16S rRNA in bridges B5 and B8.

Functionally, binds to 23S rRNA. Forms part of two intersubunit bridges in the 70S ribosome. In Desulfovibrio desulfuricans (strain ATCC 27774 / DSM 6949 / MB), this protein is Large ribosomal subunit protein uL14.